Reading from the N-terminus, the 872-residue chain is DNA mismatch repair protein MutS (872 aa).

623–630 (GPNMAGKS) is an ATP binding site.

This sequence belongs to the DNA mismatch repair MutS family.

In terms of biological role, this protein is involved in the repair of mismatches in DNA. It is possible that it carries out the mismatch recognition step. This protein has a weak ATPase activity. In Trichlorobacter lovleyi (strain ATCC BAA-1151 / DSM 17278 / SZ) (Geobacter lovleyi), this protein is DNA mismatch repair protein MutS.